Here is a 433-residue protein sequence, read N- to C-terminus: Trigger factor (433 aa).

The region spanning 163 to 248 is the PPIase FKBP-type domain; it reads GDFVTFDFKG…IKEIKVKELP (86 aa).

The protein belongs to the FKBP-type PPIase family. Tig subfamily.

It localises to the cytoplasm. The enzyme catalyses [protein]-peptidylproline (omega=180) = [protein]-peptidylproline (omega=0). Involved in protein export. Acts as a chaperone by maintaining the newly synthesized protein in an open conformation. Functions as a peptidyl-prolyl cis-trans isomerase. This chain is Trigger factor, found in Geotalea uraniireducens (strain Rf4) (Geobacter uraniireducens).